Consider the following 324-residue polypeptide: Aprataxin (324 aa).

In terms of domain architecture, FHA-like spans 23–72 (SVTLGRGPDTKIKDKKCSREQVELRADCNRGFVTVKQLGVNPTLVDDVVV). Residues 100-160 (TEDTSRSKPS…QGLKASMQDP (61 aa)) form a disordered region. Residues 111 to 125 (RAQQIQSPTKTTADV) show a composition bias toward polar residues. Positions 150-255 (SQGLKASMQD…ISQDFDSPCL (106 aa)) constitute an HIT domain. Interaction with DNA substrate regions lie at residues 175–179 (DKYPK) and 237–238 (SM). The short motif at 240-244 (HVHLH) is the Histidine triad motif element. H242 (tele-AMP-histidine intermediate) is an active-site residue. The C2H2-type zinc finger occupies 299–321 (LRCHVCGKEQTTIPKLKDHLKTH).

It localises to the nucleus. Its subcellular location is the nucleoplasm. The protein localises to the nucleolus. It carries out the reaction a 5'-end adenosine-5'-diphospho-5'-2'-deoxyribonucleoside-DNA + H2O = a 5'-end 5'-phospho-2'-deoxyribonucleoside-DNA + AMP + 2 H(+). The enzyme catalyses a 5'-end adenosine-5'-diphospho-5'-ribonucleoside-2'-deoxyribonucleotide-DNA + H2O = a 5'-end 5'-phospho-ribonucleoside-2'-deoxyribonucleotide-DNA + AMP + 2 H(+). It catalyses the reaction a 3'-end 2'-deoxyribonucleotide-3'-diphospho-5'-guanosine-DNA + H2O = a 3'-end 2'-deoxyribonucleotide 3'-phosphate-DNA + GMP + 2 H(+). Functionally, DNA-binding protein involved in single-strand DNA break repair, double-strand DNA break repair and base excision repair. Resolves abortive DNA ligation intermediates formed either at base excision sites, or when DNA ligases attempt to repair non-ligatable breaks induced by reactive oxygen species. Catalyzes the release of adenylate groups covalently linked to 5'-phosphate termini, resulting in the production of 5'-phosphate termini that can be efficiently rejoined. Also able to hydrolyze adenosine 5'-monophosphoramidate (AMP-NH(2)) and diadenosine tetraphosphate (AppppA), but with lower catalytic activity. Likewise, catalyzes the release of 3'-linked guanosine (DNAppG) and inosine (DNAppI) from DNA, but has higher specific activity with 5'-linked adenosine (AppDNA). The protein is Aprataxin (aptx) of Danio rerio (Zebrafish).